Here is a 316-residue protein sequence, read N- to C-terminus: 4-hydroxy-3-methylbut-2-enyl diphosphate reductase (316 aa).

Cysteine 12 is a [4Fe-4S] cluster binding site. The (2E)-4-hydroxy-3-methylbut-2-enyl diphosphate site is built by histidine 41 and histidine 74. 2 residues coordinate dimethylallyl diphosphate: histidine 41 and histidine 74. The isopentenyl diphosphate site is built by histidine 41 and histidine 74. Residue cysteine 96 coordinates [4Fe-4S] cluster. Histidine 124 serves as a coordination point for (2E)-4-hydroxy-3-methylbut-2-enyl diphosphate. Histidine 124 serves as a coordination point for dimethylallyl diphosphate. Histidine 124 lines the isopentenyl diphosphate pocket. The active-site Proton donor is glutamate 126. Residue threonine 167 participates in (2E)-4-hydroxy-3-methylbut-2-enyl diphosphate binding. Cysteine 197 serves as a coordination point for [4Fe-4S] cluster. The (2E)-4-hydroxy-3-methylbut-2-enyl diphosphate site is built by serine 225, serine 226, asparagine 227, and serine 269. Serine 225, serine 226, asparagine 227, and serine 269 together coordinate dimethylallyl diphosphate. 4 residues coordinate isopentenyl diphosphate: serine 225, serine 226, asparagine 227, and serine 269.

Belongs to the IspH family. In terms of assembly, homodimer. [4Fe-4S] cluster is required as a cofactor.

The catalysed reaction is isopentenyl diphosphate + 2 oxidized [2Fe-2S]-[ferredoxin] + H2O = (2E)-4-hydroxy-3-methylbut-2-enyl diphosphate + 2 reduced [2Fe-2S]-[ferredoxin] + 2 H(+). The enzyme catalyses dimethylallyl diphosphate + 2 oxidized [2Fe-2S]-[ferredoxin] + H2O = (2E)-4-hydroxy-3-methylbut-2-enyl diphosphate + 2 reduced [2Fe-2S]-[ferredoxin] + 2 H(+). The protein operates within isoprenoid biosynthesis; dimethylallyl diphosphate biosynthesis; dimethylallyl diphosphate from (2E)-4-hydroxy-3-methylbutenyl diphosphate: step 1/1. It functions in the pathway isoprenoid biosynthesis; isopentenyl diphosphate biosynthesis via DXP pathway; isopentenyl diphosphate from 1-deoxy-D-xylulose 5-phosphate: step 6/6. Its function is as follows. Catalyzes the conversion of 1-hydroxy-2-methyl-2-(E)-butenyl 4-diphosphate (HMBPP) into a mixture of isopentenyl diphosphate (IPP) and dimethylallyl diphosphate (DMAPP). Acts in the terminal step of the DOXP/MEP pathway for isoprenoid precursor biosynthesis. The protein is 4-hydroxy-3-methylbut-2-enyl diphosphate reductase of Pectobacterium carotovorum subsp. carotovorum (strain PC1).